Here is an 89-residue protein sequence, read N- to C-terminus: UPF0335 protein OCAR_5086/OCA5_c28780 (89 aa).

This sequence belongs to the UPF0335 family.

This chain is UPF0335 protein OCAR_5086/OCA5_c28780, found in Afipia carboxidovorans (strain ATCC 49405 / DSM 1227 / KCTC 32145 / OM5) (Oligotropha carboxidovorans).